The primary structure comprises 596 residues: Jacalin-related lectin 46 (596 aa).

A disordered region spans residues 1–20; the sequence is MTERSEALGKDGNRRWDDKS. Jacalin-type lectin domains lie at 2 to 143, 146 to 291, 294 to 439, and 446 to 592; these read TERS…YFTR, PTRI…YFTP, PTKS…HFYP, and AEKL…HVLP.

This sequence belongs to the jacalin lectin family.

This chain is Jacalin-related lectin 46 (JAL46), found in Arabidopsis thaliana (Mouse-ear cress).